The chain runs to 83 residues: Large ribosomal subunit protein eL14 (83 aa).

It belongs to the eukaryotic ribosomal protein eL14 family. In terms of assembly, part of the 50S ribosomal subunit.

In Thermococcus kodakarensis (strain ATCC BAA-918 / JCM 12380 / KOD1) (Pyrococcus kodakaraensis (strain KOD1)), this protein is Large ribosomal subunit protein eL14.